We begin with the raw amino-acid sequence, 327 residues long: UPF0665 family protein C23C4.06c (327 aa).

The protein belongs to the UPF0665 family.

The protein resides in the cytoplasm. It is found in the nucleus. In Schizosaccharomyces pombe (strain 972 / ATCC 24843) (Fission yeast), this protein is UPF0665 family protein C23C4.06c.